Reading from the N-terminus, the 225-residue chain is Uridine kinase (225 aa).

12 to 19 is a binding site for ATP; the sequence is GGTGAGKT.

This sequence belongs to the uridine kinase family.

The protein resides in the cytoplasm. The enzyme catalyses uridine + ATP = UMP + ADP + H(+). The catalysed reaction is cytidine + ATP = CMP + ADP + H(+). It functions in the pathway pyrimidine metabolism; CTP biosynthesis via salvage pathway; CTP from cytidine: step 1/3. Its pathway is pyrimidine metabolism; UMP biosynthesis via salvage pathway; UMP from uridine: step 1/1. The sequence is that of Uridine kinase from Halobacterium salinarum (strain ATCC 700922 / JCM 11081 / NRC-1) (Halobacterium halobium).